A 543-amino-acid chain; its full sequence is Chaperonin GroEL 2 (543 aa).

ATP is bound by residues 29 to 32 (TLGP), 86 to 90 (DGTTT), glycine 413, and aspartate 495. A disordered region spans residues 524 to 543 (KPEPKENAPTGAGMGGDFDY).

This sequence belongs to the chaperonin (HSP60) family. In terms of assembly, forms a cylinder of 14 subunits composed of two heptameric rings stacked back-to-back. Interacts with the co-chaperonin GroES.

It localises to the cytoplasm. It carries out the reaction ATP + H2O + a folded polypeptide = ADP + phosphate + an unfolded polypeptide.. In terms of biological role, together with its co-chaperonin GroES, plays an essential role in assisting protein folding. The GroEL-GroES system forms a nano-cage that allows encapsulation of the non-native substrate proteins and provides a physical environment optimized to promote and accelerate protein folding. In Acaryochloris marina (strain MBIC 11017), this protein is Chaperonin GroEL 2.